A 116-amino-acid chain; its full sequence is Large ribosomal subunit protein bL17 (116 aa).

The protein belongs to the bacterial ribosomal protein bL17 family. Part of the 50S ribosomal subunit. Contacts protein L32.

The sequence is that of Large ribosomal subunit protein bL17 from Chloroflexus aggregans (strain MD-66 / DSM 9485).